We begin with the raw amino-acid sequence, 234 residues long: Enterobactin synthase component D (234 aa).

Aspartate 107, glutamate 109, and glutamate 152 together coordinate Mg(2+).

This sequence belongs to the P-Pant transferase superfamily. EntD family. EntB, EntD, EntE, and EntF form a multienzyme complex called enterobactin synthase. Mg(2+) serves as cofactor.

The protein resides in the membrane. The catalysed reaction is apo-[aryl-carrier protein] + CoA = holo-[aryl-carrier protein] + adenosine 3',5'-bisphosphate + H(+). It catalyses the reaction apo-[peptidyl-carrier protein] + CoA = holo-[peptidyl-carrier protein] + adenosine 3',5'-bisphosphate + H(+). The protein operates within siderophore biosynthesis; enterobactin biosynthesis. In terms of biological role, involved in the biosynthesis of the siderophore enterobactin (enterochelin), which is a macrocyclic trimeric lactone of N-(2,3-dihydroxybenzoyl)-serine. The serine trilactone serves as a scaffolding for the three catechol functionalities that provide hexadentate coordination for the tightly ligated iron(2+) atoms. Plays an essential role in the assembly of the enterobactin by catalyzing the transfer of the 4'-phosphopantetheine (Ppant) moiety from coenzyme A to the apo-domains of both EntB (ArCP domain) and EntF (PCP domain) to yield their holo-forms which make them competent for the activation of 2,3-dihydroxybenzoate (DHB) and L-serine, respectively. This chain is Enterobactin synthase component D, found in Salmonella typhimurium (strain LT2 / SGSC1412 / ATCC 700720).